The chain runs to 479 residues: MGKILKSKSSWPRTVVRKWLNLRSGAYEFHSDYPVKGMEPRRKSCSDMIVPENFQGWLGQGNGDLKHSTGEQHVTRVDDKLDLKMFVGTWNVGGKSPHEGLDLKDWLKSPADADIYVLGFQEIVPLNAGNVLGAEDNGPAAKWLSLIREALNNTNNLSPNELEHTKSSQQPRFSFSGLSDDTPIPCNSTPPRGYSLAASKQMVGIFLCVWVRDDLRKRITNLKVSCVGRGIMGYLGNKGSVSISMSLHETSLCFVCTHLTSGEKEGDELRRNLDVTEIFKRTRFSRSSKDSRPETIMDHDKVIWLGDLNYRLRASSDLHEQLRNHDWESLLEKDQLKIEQRAGRIFKGWEEGKIYFAPTYKYRINSDNYVVQTEKSKEKRRTPAWCDRILWKGDGMKQLWYVRGESKFSDHRPVQSLFSVHIDLKNQSNRKTKPVNQNHRPNPVLTYTCHGKVQAEEILLLTRAQSCIDTLPRLISSAS.

Catalytic stretches follow at residues 300-315 and 379-394; these read DKVI…LRAS and KRRT…WKGD.

It belongs to the inositol polyphosphate 5-phosphatase family.

In Arabidopsis thaliana (Mouse-ear cress), this protein is Type I inositol polyphosphate 5-phosphatase 8.